An 89-amino-acid chain; its full sequence is ATP synthase subunit c (89 aa).

Transmembrane regions (helical) follow at residues isoleucine 3–alanine 23 and phenylalanine 53–phenylalanine 73.

This sequence belongs to the ATPase C chain family. As to quaternary structure, F-type ATPases have 2 components, F(1) - the catalytic core - and F(0) - the membrane proton channel. F(1) has five subunits: alpha(3), beta(3), gamma(1), delta(1), epsilon(1). F(0) has three main subunits: a(1), b(2) and c(10-14). The alpha and beta chains form an alternating ring which encloses part of the gamma chain. F(1) is attached to F(0) by a central stalk formed by the gamma and epsilon chains, while a peripheral stalk is formed by the delta and b chains.

Its subcellular location is the cell inner membrane. In terms of biological role, f(1)F(0) ATP synthase produces ATP from ADP in the presence of a proton or sodium gradient. F-type ATPases consist of two structural domains, F(1) containing the extramembraneous catalytic core and F(0) containing the membrane proton channel, linked together by a central stalk and a peripheral stalk. During catalysis, ATP synthesis in the catalytic domain of F(1) is coupled via a rotary mechanism of the central stalk subunits to proton translocation. Key component of the F(0) channel; it plays a direct role in translocation across the membrane. A homomeric c-ring of between 10-14 subunits forms the central stalk rotor element with the F(1) delta and epsilon subunits. In Verminephrobacter eiseniae (strain EF01-2), this protein is ATP synthase subunit c.